The sequence spans 446 residues: Solute carrier family 52, riboflavin transporter, member 2 (446 aa).

The next 4 helical transmembrane spans lie at 14 to 34, 47 to 67, 79 to 99, and 104 to 124; these read LLVA…WVEL, LPSY…VVTL, APIQ…APLW, and VMAG…LALA. N129 carries N-linked (GlcNAc...) asparagine glycosylation. The next 2 membrane-spanning stretches (helical) occupy residues 147–167 and 196–216; these read FFLG…GQGV and FFGA…GLLL. Residues 228-267 form a disordered region; it reads GSGTGLRGGAPGVEEEEEEEASPLQEPPSQAAGNTPSPDP. Residues 229-238 show a composition bias toward gly residues; it reads SGTGLRGGAP. The segment covering 254–263 has biased composition (polar residues); sequence PPSQAAGNTP. 5 helical membrane-spanning segments follow: residues 278–298, 313–333, 340–360, 367–387, and 405–425; these read ACLL…LPAV, LAVV…MGIL, LGGL…LAIL, VGTS…LGVF, and ALLA…VTMF.

Belongs to the riboflavin transporter family.

Its subcellular location is the cell membrane. The enzyme catalyses riboflavin(in) = riboflavin(out). With respect to regulation, riboflavin transport is Na(+)-independent but moderately pH-sensitive. Activity is strongly inhibited by riboflavin analogs, such as lumiflavin. Weakly inhibited by flavin adenine dinucleotide (FAD) and flavin mononucleotide (FMN). Plasma membrane transporter mediating the uptake by cells of the water soluble vitamin B2/riboflavin that plays a key role in biochemical oxidation-reduction reactions of the carbohydrate, lipid, and amino acid metabolism. May also act as a receptor for 4-hydroxybutyrate. In terms of biological role, (Microbial infection) In case of infection by porcine endogenous retrovirus (PERV-A), acts as a cell receptor to retroviral envelopes. The polypeptide is Solute carrier family 52, riboflavin transporter, member 2 (SLC52A2) (Sus scrofa (Pig)).